Here is a 64-residue protein sequence, read N- to C-terminus: MRLHHLLLVLFFVVLSAGSGFTHGVTDSLSCRWKKGICVLTRCPGTMRQIGTCFGPPVKCCRLK.

The signal sequence occupies residues 1-22 (MRLHHLLLVLFFVVLSAGSGFT). 3 cysteine pairs are disulfide-bonded: Cys-31-Cys-60, Cys-38-Cys-53, and Cys-43-Cys-61.

This sequence belongs to the beta-defensin family.

Its subcellular location is the secreted. Functionally, has bactericidal activity. This is Beta-defensin 2 (DEFB2) from Ovis aries (Sheep).